Here is a 74-residue protein sequence, read N- to C-terminus: Protein krueppel (74 aa).

4 consecutive C2H2-type zinc fingers follow at residues 1–4 (ERTH), 10–32 (FECPECHKRFTRDHHLKTHMRLH), 38–60 (YHCSHCDRQFVQVANLRRHLRVH), and 66–74 (YACELCAAK).

This sequence belongs to the krueppel C2H2-type zinc-finger protein family.

It localises to the nucleus. Functionally, krueppel is a gap class segmentation protein. The protein is Protein krueppel (Kr) of Apis mellifera (Honeybee).